The sequence spans 521 residues: CD166 antigen (521 aa).

At 1–465 (GSPVFIAFRS…NREQVNHRAT (465 aa)) the chain is on the extracellular side. Residues Asn-33, Asn-105, Asn-244, Asn-299, Asn-395, Asn-418, and Asn-437 are each glycosylated (N-linked (GlcNAc...) asparagine). The 110-residue stretch at 63–172 (PTIVKVFKQP…YGPSGQKTVQ (110 aa)) folds into the Ig-like V-type 2 domain. Cystine bridges form between Cys-95–Cys-158, Cys-208–Cys-251, Cys-292–Cys-330, and Cys-373–Cys-423. Ig-like C2-type domains are found at residues 183–266 (PTEQ…TAIT), 271–347 (DLSL…ESLT), and 354–439 (PQIK…LNVS). A helical transmembrane segment spans residues 466 to 487 (LIVGIVLRLLHGALVAGVVYWL). Over 488–521 (YVKKSKTASKHVNKDLGNLEENKKLEQNNHRTEA) the chain is Cytoplasmic. Residues 500–521 (NKDLGNLEENKKLEQNNHRTEA) form a disordered region. Residues 507–521 (EENKKLEQNNHRTEA) are compositionally biased toward basic and acidic residues.

Homodimer. Interacts (via extracellular domain) with CD6 (via extracellular domain). Homodimerization and interaction with CD6 involve the same region and cannot occur simultaneously. The affinity for CD6 is much higher than the affinity for self-association. Interacts (via glycosylated extracellular domain) with LGALS1 and LGALS3. Interaction with LGALS1 or LGALS3 inhibits interaction with CD6. Post-translationally, glycosylated.

Its subcellular location is the cell membrane. The protein resides in the cell projection. It is found in the axon. The protein localises to the dendrite. Functionally, cell adhesion molecule that mediates both heterotypic cell-cell contacts via its interaction with CD6, as well as homotypic cell-cell contacts. Promotes T-cell activation and proliferation via its interactions with CD6. Contributes to the formation and maturation of the immunological synapse via its interactions with CD6. Mediates homotypic interactions with cells that express ALCAM. Mediates attachment of dendritic cells onto endothelial cells via homotypic interaction. Inhibits endothelial cell migration and promotes endothelial tube formation via homotypic interactions. Required for normal organization of the lymph vessel network. Required for normal hematopoietic stem cell engraftment in the bone marrow. Plays a role in hematopoiesis; required for normal numbers of hematopoietic stem cells in bone marrow. Promotes in vitro osteoblast proliferation and differentiation. Promotes neurite extension, axon growth and axon guidance; axons grow preferentially on surfaces that contain ALCAM. Mediates outgrowth and pathfinding for retinal ganglion cell axons. This is CD166 antigen (ALCAM) from Canis lupus familiaris (Dog).